Here is a 626-residue protein sequence, read N- to C-terminus: (+)-3-carene synthase 1, chloroplastic (626 aa).

The transit peptide at 1 to 45 (MSLISAVPLASSCVSKSLISSVREHTALRRAIATLQMSRRGKSVA) directs the protein to the chloroplast. Asp-377, Asp-381, and Asp-529 together coordinate Mg(2+). The DDXXD motif motif lies at 377–381 (DDMYD).

This sequence belongs to the terpene synthase family. Tpsd subfamily. The cofactor is Mg(2+). Mn(2+) is required as a cofactor.

It is found in the plastid. The protein localises to the chloroplast. The enzyme catalyses (2E)-geranyl diphosphate = (+)-car-3-ene + diphosphate. The catalysed reaction is (2E)-geranyl diphosphate = terpinolene + diphosphate. It participates in terpene metabolism; oleoresin biosynthesis. It functions in the pathway secondary metabolite biosynthesis; terpenoid biosynthesis. Monoterpene synthase (TPS) involved in the biosynthesis of monoterpene natural products included in conifer oleoresin secretions and volatile emissions; these compounds contribute to biotic and abiotic stress defense against herbivores and pathogens. Catalyzes the conversion of (2E)-geranyl diphosphate (GPP) to (+)-car-3-ene and, to a lower extent, to terpinolene. This chain is (+)-3-carene synthase 1, chloroplastic, found in Pinus contorta (Shore pine).